A 159-amino-acid polypeptide reads, in one-letter code: Cyclic pyranopterin monophosphate synthase (159 aa).

Residues 75–77 (LCH) and 113–114 (ME) contribute to the substrate site. The active site involves aspartate 128.

It belongs to the MoaC family. Homohexamer; trimer of dimers.

The enzyme catalyses (8S)-3',8-cyclo-7,8-dihydroguanosine 5'-triphosphate = cyclic pyranopterin phosphate + diphosphate. Its pathway is cofactor biosynthesis; molybdopterin biosynthesis. Its function is as follows. Catalyzes the conversion of (8S)-3',8-cyclo-7,8-dihydroguanosine 5'-triphosphate to cyclic pyranopterin monophosphate (cPMP). The protein is Cyclic pyranopterin monophosphate synthase of Vibrio atlanticus (strain LGP32) (Vibrio splendidus (strain Mel32)).